A 518-amino-acid chain; its full sequence is Chaperonin GroEL (518 aa).

ATP contacts are provided by residues 30 to 33 (TLGP), Lys-51, 87 to 91 (DGTTT), and Gly-415.

It belongs to the chaperonin (HSP60) family. As to quaternary structure, forms a cylinder of 14 subunits composed of two heptameric rings stacked back-to-back. Interacts with the co-chaperonin GroES.

The protein resides in the cytoplasm. The enzyme catalyses ATP + H2O + a folded polypeptide = ADP + phosphate + an unfolded polypeptide.. Together with its co-chaperonin GroES, plays an essential role in assisting protein folding. The GroEL-GroES system forms a nano-cage that allows encapsulation of the non-native substrate proteins and provides a physical environment optimized to promote and accelerate protein folding. This is Chaperonin GroEL from Desulfotalea psychrophila (strain LSv54 / DSM 12343).